Reading from the N-terminus, the 428-residue chain is Flotillin-2 (428 aa).

G2 carries N-myristoyl glycine lipidation. The S-palmitoyl cysteine; by ZDHHC5 moiety is linked to residue C4. Residue C19 is the site of S-palmitoyl cysteine attachment. C20 carries S-palmitoyl cysteine; by ZDHHC5 lipidation. S405 carries the phosphoserine modification.

Belongs to the band 7/mec-2 family. Flotillin subfamily. In terms of assembly, heterooligomeric complex of flotillin-1 and flotillin-2 and caveolin-1 and caveolin-2. Interacts with ECPAS. Post-translationally, ZDHHC5-catalyzed palmitoylation may be required for the formation of higher-order complexes and for neurite outgrowth in cultured neural stem cells.

It is found in the cell membrane. Its subcellular location is the membrane. The protein localises to the caveola. It localises to the endosome. May act as a scaffolding protein within caveolar membranes, functionally participating in formation of caveolae or caveolae-like vesicles. May be involved in epidermal cell adhesion and epidermal structure and function. The sequence is that of Flotillin-2 (FLOT2) from Bos taurus (Bovine).